The primary structure comprises 135 residues: Small ribosomal subunit protein uS9 (135 aa).

The span at 108–118 shows a compositional bias: basic and acidic residues; it reads VGDSRRTEPHK. Residues 108 to 135 form a disordered region; the sequence is VGDSRRTEPHKPNRSTKGPRAKRQKSYR. Over residues 119–135 the composition is skewed to basic residues; that stretch reads PNRSTKGPRAKRQKSYR.

The protein belongs to the universal ribosomal protein uS9 family. Part of the 30S ribosomal subunit.

The sequence is that of Small ribosomal subunit protein uS9 from Thermococcus kodakarensis (strain ATCC BAA-918 / JCM 12380 / KOD1) (Pyrococcus kodakaraensis (strain KOD1)).